Reading from the N-terminus, the 62-residue chain is Bowman-Birk type proteinase inhibitor (62 aa).

7 disulfide bridges follow: Cys8/Cys61, Cys9/Cys24, Cys12/Cys57, Cys14/Cys22, Cys31/Cys38, Cys35/Cys50, and Cys40/Cys48.

As to quaternary structure, forms a monomer at protein concentrations of below 1 mM. At concentrations of above 2 mM, self-associates.

In terms of biological role, inhibits trypsin but not chymotrypsin. Inhibits the trypsin-like proteinase activity present in larvae of the crop pests Adoxophyes orana, Hyphantria cunea, Lobesia botrana and Ostrinia nubilalis. This is Bowman-Birk type proteinase inhibitor from Medicago scutellata (Snail medic).